The chain runs to 210 residues: Large ribosomal subunit protein uL3 (210 aa).

The tract at residues 126-150 (VSATHGSHRNHRKPGSVGASSTPSR) is disordered.

It belongs to the universal ribosomal protein uL3 family. In terms of assembly, part of the 50S ribosomal subunit. Forms a cluster with proteins L14 and L19.

Its function is as follows. One of the primary rRNA binding proteins, it binds directly near the 3'-end of the 23S rRNA, where it nucleates assembly of the 50S subunit. The sequence is that of Large ribosomal subunit protein uL3 from Tropheryma whipplei (strain TW08/27) (Whipple's bacillus).